Reading from the N-terminus, the 216-residue chain is MKTLDTQLKLRYLGRQDYLTSWQAMSDFTNQRDENTIDEIWLVEHPAVFTQGLAGKAEHLLKHSEIPIVQSDRGGQITFHAPGQLVVYLLINLRRKALNVRALVTVMEDSIINLLADYNVIAVAKPDAPGVYVNGKKIASLGLKIRKGCSFHGLALNVDMDLSPFLQINPCGYAGLEMTQCKAEGLTLSVDELAPLLIEKMNQQLDYSHIESFHHE.

Residues 34 to 209 (ENTIDEIWLV…KMNQQLDYSH (176 aa)) form the BPL/LPL catalytic domain. Residues 73 to 80 (RGGQITFH), 140 to 142 (SLG), and 153 to 155 (GLA) contribute to the substrate site. Cys-171 (acyl-thioester intermediate) is an active-site residue.

Belongs to the LipB family.

The protein resides in the cytoplasm. It catalyses the reaction octanoyl-[ACP] + L-lysyl-[protein] = N(6)-octanoyl-L-lysyl-[protein] + holo-[ACP] + H(+). It participates in protein modification; protein lipoylation via endogenous pathway; protein N(6)-(lipoyl)lysine from octanoyl-[acyl-carrier-protein]: step 1/2. Its function is as follows. Catalyzes the transfer of endogenously produced octanoic acid from octanoyl-acyl-carrier-protein onto the lipoyl domains of lipoate-dependent enzymes. Lipoyl-ACP can also act as a substrate although octanoyl-ACP is likely to be the physiological substrate. The polypeptide is Octanoyltransferase (Psychromonas ingrahamii (strain DSM 17664 / CCUG 51855 / 37)).